A 291-amino-acid polypeptide reads, in one-letter code: m-AAA protease-interacting protein 1, mitochondrial (291 aa).

The transit peptide at 1–96 (MALAARLLPL…SLPASPIRSY (96 aa)) directs the protein to the mitochondrion.

As to quaternary structure, interacts with AFG3L2. Interacts with SPG7. Interacts with SMDT1/EMRE (via the N-terminal transit peptide); interaction is direct and takes place before maturation of SMDT1/EMRE.

The protein localises to the mitochondrion matrix. Its function is as follows. Promotes sorting of SMDT1/EMRE in mitochondria by ensuring its maturation. Interacts with the transit peptide region of SMDT1/EMRE precursor protein in the mitochondrial matrix, leading to protect it against protein degradation by YME1L1, thereby ensuring SMDT1/EMRE maturation by the mitochondrial processing peptidase (PMPCA and PMPCB). In Rattus norvegicus (Rat), this protein is m-AAA protease-interacting protein 1, mitochondrial.